The chain runs to 474 residues: UDP-glycosyltransferase 71E1 (474 aa).

UDP-alpha-D-glucose-binding positions include S275, 341–342 (WA), 359–367 (HCGWNSTLE), and 381–384 (YAEQ).

Belongs to the UDP-glycosyltransferase family.

May glycosylate diterpenes or flavonols in leaves. This chain is UDP-glycosyltransferase 71E1, found in Stevia rebaudiana (Stevia).